Reading from the N-terminus, the 202-residue chain is MSVSGPLPRIPAEAGAALFTDARTAYSFADTPVDDATLTGIWELARWAPTAANTQPMRVLYVRTAEGKERLLPHLDEGNRPKSASAPVVAVLAVDHRFHEHLPHVLPVRPEMKEYFEGEPAQREAITSFNGPLQAGYFILAVRALGLAAGPMAGFDPAGIDKEFFADSDWHSILVVNIGHPAGPPAFDRMPRLAHEHALDWA.

It belongs to the nitroreductase family. HadB/RutE subfamily. FMN serves as cofactor.

The polypeptide is Putative NADH dehydrogenase/NAD(P)H nitroreductase SCO7141 (Streptomyces coelicolor (strain ATCC BAA-471 / A3(2) / M145)).